A 385-amino-acid chain; its full sequence is MKNITILGATGSIGTQTLDVIRREKEELKLVAISANKSDKKVIEIIKEFKPKYAVLMEENAFKIVEDFCIDNKIDTKVLKGMEGMIYISTLEEVNTVVTSVVGMIGLVPTIKAIESGKDIALANKETLVVAGELVISKAKEHNVNILPVDSEHGAIFQCLRGNKKEEVKNIIVTASGGPFRGKKKEELIDVKPEHALKHPKWNMGRKISIDSATLMNKGLEVIEAHFLFGVDYENIKVVVHPQSIVHSMVEYKDGSVIAQMATPDMKLPIQYALNYPNRKESQIEPLDFYKISNLTFEKPDMDTFLPLKLAYEAGKKGGVMPAILNGANEVAVDLFLKGKIEFLQIGDLLQECMNKFYKSMEATLENVISVDKEVREYLGKKYDI.

Residues Thr10, Gly11, Ser12, Ile13, Lys37, and Asn124 each contribute to the NADPH site. Lys125 is a binding site for 1-deoxy-D-xylulose 5-phosphate. Glu126 is an NADPH binding site. Position 150 (Asp150) interacts with Mn(2+). 1-deoxy-D-xylulose 5-phosphate-binding residues include Ser151, Glu152, Ser176, and His199. Position 152 (Glu152) interacts with Mn(2+). Gly205 is a binding site for NADPH. The 1-deoxy-D-xylulose 5-phosphate site is built by Ser212, Asn217, Lys218, and Glu221. Glu221 is a Mn(2+) binding site.

It belongs to the DXR family. Requires Mg(2+) as cofactor. Mn(2+) is required as a cofactor.

The catalysed reaction is 2-C-methyl-D-erythritol 4-phosphate + NADP(+) = 1-deoxy-D-xylulose 5-phosphate + NADPH + H(+). It participates in isoprenoid biosynthesis; isopentenyl diphosphate biosynthesis via DXP pathway; isopentenyl diphosphate from 1-deoxy-D-xylulose 5-phosphate: step 1/6. In terms of biological role, catalyzes the NADPH-dependent rearrangement and reduction of 1-deoxy-D-xylulose-5-phosphate (DXP) to 2-C-methyl-D-erythritol 4-phosphate (MEP). The protein is 1-deoxy-D-xylulose 5-phosphate reductoisomerase of Clostridium botulinum (strain ATCC 19397 / Type A).